The chain runs to 417 residues: NADH-quinone oxidoreductase subunit D (417 aa).

This sequence belongs to the complex I 49 kDa subunit family. As to quaternary structure, NDH-1 is composed of 14 different subunits. Subunits NuoB, C, D, E, F, and G constitute the peripheral sector of the complex.

Its subcellular location is the cell inner membrane. It catalyses the reaction a quinone + NADH + 5 H(+)(in) = a quinol + NAD(+) + 4 H(+)(out). Its function is as follows. NDH-1 shuttles electrons from NADH, via FMN and iron-sulfur (Fe-S) centers, to quinones in the respiratory chain. The immediate electron acceptor for the enzyme in this species is believed to be ubiquinone. Couples the redox reaction to proton translocation (for every two electrons transferred, four hydrogen ions are translocated across the cytoplasmic membrane), and thus conserves the redox energy in a proton gradient. The sequence is that of NADH-quinone oxidoreductase subunit D from Paracidovorax citrulli (strain AAC00-1) (Acidovorax citrulli).